Consider the following 457-residue polypeptide: UDP-N-acetylmuramate--L-alanine ligase (457 aa).

109–115 is a binding site for ATP; sequence GTDGKTT.

The protein belongs to the MurCDEF family.

The protein resides in the cytoplasm. The catalysed reaction is UDP-N-acetyl-alpha-D-muramate + L-alanine + ATP = UDP-N-acetyl-alpha-D-muramoyl-L-alanine + ADP + phosphate + H(+). Its pathway is cell wall biogenesis; peptidoglycan biosynthesis. Its function is as follows. Cell wall formation. In Thermotoga sp. (strain RQ2), this protein is UDP-N-acetylmuramate--L-alanine ligase.